We begin with the raw amino-acid sequence, 235 residues long: LexA repressor (235 aa).

A DNA-binding region (H-T-H motif) is located at residues 26 to 46 (FDEMKEALDLASKSGIHRLIT). Residues 72–104 (QATTAAPPKGRGAFRPQVLEGGGQAPTTSAQPQ) are disordered. Catalysis depends on for autocatalytic cleavage activity residues serine 156 and lysine 193.

It belongs to the peptidase S24 family. As to quaternary structure, homodimer.

It catalyses the reaction Hydrolysis of Ala-|-Gly bond in repressor LexA.. Functionally, represses a number of genes involved in the response to DNA damage (SOS response), including recA and lexA. In the presence of single-stranded DNA, RecA interacts with LexA causing an autocatalytic cleavage which disrupts the DNA-binding part of LexA, leading to derepression of the SOS regulon and eventually DNA repair. The sequence is that of LexA repressor from Caulobacter sp. (strain K31).